Reading from the N-terminus, the 628-residue chain is 1-deoxy-D-xylulose-5-phosphate synthase (628 aa).

Thiamine diphosphate-binding positions include H72 and 113 to 115; that span reads GHS. Residue D144 participates in Mg(2+) binding. Residues 145–146, N173, Y284, and E367 each bind thiamine diphosphate; that span reads GA. N173 provides a ligand contact to Mg(2+).

Belongs to the transketolase family. DXPS subfamily. In terms of assembly, homodimer. Mg(2+) is required as a cofactor. The cofactor is thiamine diphosphate.

It catalyses the reaction D-glyceraldehyde 3-phosphate + pyruvate + H(+) = 1-deoxy-D-xylulose 5-phosphate + CO2. The protein operates within metabolic intermediate biosynthesis; 1-deoxy-D-xylulose 5-phosphate biosynthesis; 1-deoxy-D-xylulose 5-phosphate from D-glyceraldehyde 3-phosphate and pyruvate: step 1/1. Its function is as follows. Catalyzes the acyloin condensation reaction between C atoms 2 and 3 of pyruvate and glyceraldehyde 3-phosphate to yield 1-deoxy-D-xylulose-5-phosphate (DXP). This Exiguobacterium sibiricum (strain DSM 17290 / CCUG 55495 / CIP 109462 / JCM 13490 / 255-15) protein is 1-deoxy-D-xylulose-5-phosphate synthase.